Here is a 207-residue protein sequence, read N- to C-terminus: LexA repressor (207 aa).

Positions 29–49 form a DNA-binding region, H-T-H motif; it reads VREICSAVDLSSTSTVHGHLA. Active-site for autocatalytic cleavage activity residues include Ser-128 and Lys-166.

This sequence belongs to the peptidase S24 family. In terms of assembly, homodimer.

It carries out the reaction Hydrolysis of Ala-|-Gly bond in repressor LexA.. Represses a number of genes involved in the response to DNA damage (SOS response), including recA and lexA. In the presence of single-stranded DNA, RecA interacts with LexA causing an autocatalytic cleavage which disrupts the DNA-binding part of LexA, leading to derepression of the SOS regulon and eventually DNA repair. In Lactobacillus gasseri (strain ATCC 33323 / DSM 20243 / BCRC 14619 / CIP 102991 / JCM 1131 / KCTC 3163 / NCIMB 11718 / NCTC 13722 / AM63), this protein is LexA repressor.